Here is a 164-residue protein sequence, read N- to C-terminus: Peroxynitrite isomerase 2 (164 aa).

The GXWXGXG motif lies at 17-23; that stretch reads GSWAGRG. Histidine 155 provides a ligand contact to heme b.

This sequence belongs to the nitrobindin family. As to quaternary structure, homodimer. Heme b is required as a cofactor.

It catalyses the reaction peroxynitrite = nitrate. It functions in the pathway nitrogen metabolism. Its function is as follows. Heme-binding protein able to scavenge peroxynitrite and to protect free L-tyrosine against peroxynitrite-mediated nitration, by acting as a peroxynitrite isomerase that converts peroxynitrite to nitrate. Therefore, this protein likely plays a role in peroxynitrite sensing and in the detoxification of reactive nitrogen and oxygen species (RNS and ROS, respectively). Is able to bind nitric oxide (NO) in vitro, but may act as a sensor of peroxynitrite levels in vivo. The protein is Peroxynitrite isomerase 2 of Mycobacterium bovis (strain BCG / Pasteur 1173P2).